Here is a 406-residue protein sequence, read N- to C-terminus: High mobility group nucleosome-binding domain-containing protein 5 (406 aa).

Residues 1 to 406 (MPKRKAAGDV…GEKEEPLSIV (406 aa)) are disordered. Residue T29 is modified to Phosphothreonine. Over residues 35-44 (KRASTSRKTK) the composition is skewed to basic residues. Basic and acidic residues-rich tracts occupy residues 63-72 (TKPEDVKDEC), 92-101 (MEAEEVKEQI), 110-126 (GEKK…DELK), 136-159 (EDGK…EGLN), and 166-187 (KSED…KGED). A Glycyl lysine isopeptide (Lys-Gly) (interchain with G-Cter in SUMO2) cross-link involves residue K64. K98 participates in a covalent cross-link: Glycyl lysine isopeptide (Lys-Gly) (interchain with G-Cter in SUMO1); alternate. K98 participates in a covalent cross-link: Glycyl lysine isopeptide (Lys-Gly) (interchain with G-Cter in SUMO2); alternate. K121 participates in a covalent cross-link: Glycyl lysine isopeptide (Lys-Gly) (interchain with G-Cter in SUMO2). Over residues 188-200 (GKEEGDEKEEEKD) the composition is skewed to acidic residues. Composition is skewed to basic and acidic residues over residues 201–239 (DKEG…KEGQ), 246–266 (EDLH…KEGQ), 272–284 (KEIH…KEGQ), and 290–311 (KEYL…KEGQ). A compositionally biased stretch (acidic residues) spans 312–325 (PEEDGKEDQPEEDG). Residues 326 to 365 (KEGQCKEDGKEGHHEEGGKEDLHEEDGKEKDGGKEDRKEE) are compositionally biased toward basic and acidic residues. Over residues 366 to 376 (GEQEVAVDEGS) the composition is skewed to acidic residues. Over residues 377 to 406 (DENKVEAEEEGAENKDFKQDGEKEEPLSIV) the composition is skewed to basic and acidic residues.

It belongs to the HMGN family. In terms of tissue distribution, expressed in liver, spleen, lung, heart, kidney, muscle and brain (at protein level). Widely expressed with highest levels in submaxillary gland, thymus, kidney and liver and lowest levels in brain, lung, pancreas and eye.

Its subcellular location is the nucleus. Functionally, preferentially binds to euchromatin and modulates cellular transcription by counteracting linker histone-mediated chromatin compaction. This Mus musculus (Mouse) protein is High mobility group nucleosome-binding domain-containing protein 5 (Hmgn5).